Reading from the N-terminus, the 78-residue chain is UPF0349 protein SSP1836 (78 aa).

It belongs to the UPF0349 family.

This is UPF0349 protein SSP1836 from Staphylococcus saprophyticus subsp. saprophyticus (strain ATCC 15305 / DSM 20229 / NCIMB 8711 / NCTC 7292 / S-41).